The sequence spans 146 residues: Large ribosomal subunit protein uL11 (146 aa).

The protein belongs to the universal ribosomal protein uL11 family. In terms of assembly, part of the ribosomal stalk of the 50S ribosomal subunit. Interacts with L10 and the large rRNA to form the base of the stalk. L10 forms an elongated spine to which L12 dimers bind in a sequential fashion forming a multimeric L10(L12)X complex. One or more lysine residues are methylated.

In terms of biological role, forms part of the ribosomal stalk which helps the ribosome interact with GTP-bound translation factors. The polypeptide is Large ribosomal subunit protein uL11 (Treponema pallidum subsp. pallidum (strain SS14)).